The chain runs to 259 residues: MDLLSKTRRINRMLQKSAGHAVNFNEMSQVLSDVIEANTYVVSRKGKLLGFAIHQEMDNSRMRKMLEDRRFPEEYSMGLLKVDETSANLDVDSPYTIFPVEMKEVFRTGWTTLVPIMGGGDRLGTLILGRINDQFVDDDLILAEVGATVVGMEILRERSEAIEEEARSKAVVQMAIGSLSYSELEAVEHIFEELEGKEGLLVASKIADRVGITRSVIVNALRKLESAGVIESRSLGMKGTFIKVLNEKLLPELEKLKTS.

Residues 1-155 form a GAF domain region; that stretch reads MDLLSKTRRI…GATVVGMEIL (155 aa). The H-T-H motif DNA-binding region spans 203-222; that stretch reads ASKIADRVGITRSVIVNALR.

Belongs to the CodY family.

Its subcellular location is the cytoplasm. In terms of biological role, DNA-binding global transcriptional regulator which is involved in the adaptive response to starvation and acts by directly or indirectly controlling the expression of numerous genes in response to nutrient availability. During rapid exponential growth, CodY is highly active and represses genes whose products allow adaptation to nutrient depletion. The sequence is that of Global transcriptional regulator CodY from Brevibacillus brevis (strain 47 / JCM 6285 / NBRC 100599).